A 417-amino-acid polypeptide reads, in one-letter code: Delta-aminolevulinic acid dehydratase, chloroplastic (417 aa).

A chloroplast-targeting transit peptide spans 1–40 (MAALLVPGGGAAPGLVWRRRRAAVQCAAASPSSPDPSWRT). The interval 63–92 (VVSGNPPAAPAAPAKAKAPPGTPVVKPLRL) is disordered. The Schiff-base intermediate with substrate role is filled by Lys286. Residues Arg296 and Lys308 each contribute to the 5-aminolevulinate site. Glu324 lines the Mg(2+) pocket. Residue Lys339 is the Schiff-base intermediate with substrate of the active site. Residues Ser365 and Tyr404 each coordinate 5-aminolevulinate.

The protein belongs to the ALAD family. In terms of assembly, homooctamer. Mg(2+) is required as a cofactor.

Its subcellular location is the plastid. The protein resides in the chloroplast. It catalyses the reaction 2 5-aminolevulinate = porphobilinogen + 2 H2O + H(+). It functions in the pathway porphyrin-containing compound metabolism; protoporphyrin-IX biosynthesis; coproporphyrinogen-III from 5-aminolevulinate: step 1/4. In terms of biological role, catalyzes an early step in the biosynthesis of tetrapyrroles. Binds two molecules of 5-aminolevulinate per subunit, each at a distinct site, and catalyzes their condensation to form porphobilinogen. The polypeptide is Delta-aminolevulinic acid dehydratase, chloroplastic (HEMB) (Selaginella martensii (Martens's spike moss)).